A 271-amino-acid polypeptide reads, in one-letter code: N-acetyltransferase ECO1 (271 aa).

The tract at residues 1 to 38 is disordered; sequence MKTYRAKRKYLSESEDDVFSSSPTQSPETSPLQPPNES. Residues 20–31 show a composition bias toward low complexity; the sequence is SSSPTQSPETSP. The CCHH-type zinc-finger motif lies at 80-104; it reads TTCKTCGMTYQVAYGPDISAHKSFH.

This sequence belongs to the acetyltransferase family. ECO subfamily.

It localises to the nucleus. Its function is as follows. Probable acetyltransferase required for the establishment of sister chromatid cohesion and couple the processes of cohesion and DNA replication to ensure that only sister chromatids become paired together. In contrast to the structural cohesins, the deposition and establishment factors are required only during S phase. Acts by acetylating the cohesin complex component SMC3. The chain is N-acetyltransferase ECO1 (ECO1) from Yarrowia lipolytica (strain CLIB 122 / E 150) (Yeast).